An 81-amino-acid polypeptide reads, in one-letter code: Defensin-like protein 115 (81 aa).

An N-terminal signal peptide occupies residues 1 to 24; it reads MAITKKMLVVFLLAFLFVTSSVHC. 4 disulfides stabilise this stretch: Cys40-Cys78, Cys46-Cys69, Cys54-Cys76, and Cys58-Cys77.

The protein belongs to the DEFL family.

Its subcellular location is the secreted. In Arabidopsis thaliana (Mouse-ear cress), this protein is Defensin-like protein 115.